The sequence spans 814 residues: Cellulase/esterase CelE (814 aa).

The N-terminal stretch at 1–34 (MKKIVSLVCVLVMLVSILGSFSVVAASPVKGFQV) is a signal peptide. The cellulase stretch occupies residues 35–354 (SGTKLLDASG…AVFWWDNGYY (320 aa)). E193 (proton donor; for cellulase activity) is an active-site residue. The Nucleophile; for cellulase activity role is filled by E316. Positions 409-479 (ANILYGDVNG…LLRSIDKFPA (71 aa)) constitute a Dockerin domain. Ca(2+) contacts are provided by D415, N417, D419, G420, K421, D426, D451, V452, N453, D455, K457, and D462. An esterase region spans residues 490–814 (PGILYNGRFD…TAEIKNKLGW (325 aa)). S612 (nucleophile; for esterase activity) is an active-site residue.

This sequence in the N-terminal section; belongs to the glycosyl hydrolase 5 (cellulase A) family. In the C-terminal section; belongs to the carbohydrate esterase 2 (CE2) family.

The protein localises to the secreted. It carries out the reaction Endohydrolysis of (1-&gt;4)-beta-D-glucosidic linkages in cellulose, lichenin and cereal beta-D-glucans.. It catalyses the reaction Deacetylation of xylans and xylo-oligosaccharides.. It participates in glycan metabolism; cellulose degradation. Its pathway is glycan degradation; xylan degradation. Esterase activity of the CE2 module is inhibited when this domain binds to cellohexaose or beta-glucan. Its function is as follows. Multifunctional enzyme involved in the degradation of plant cell wall polysaccharides. Displays endoglucanase activity against carboxymethyl cellulose (CMC) and barley beta-glucan. Also catalyzes the deacetylation of acetylated birchwood xylan and glucomannan, with a preference for the latter, and of the synthetic substrate 4-nitrophenyl acetate (4-NPAc). The chain is Cellulase/esterase CelE from Acetivibrio thermocellus (strain ATCC 27405 / DSM 1237 / JCM 9322 / NBRC 103400 / NCIMB 10682 / NRRL B-4536 / VPI 7372) (Clostridium thermocellum).